The primary structure comprises 86 residues: Short neurotoxin homolog NTL4 (86 aa).

An N-terminal signal peptide occupies residues 1–21 (MKTLLLTLVVVTIICLDLGYT). Intrachain disulfides connect C24-C45, C38-C63, C67-C78, and C79-C84.

Belongs to the three-finger toxin family. Short-chain subfamily. Orphan group III sub-subfamily. Expressed by the venom gland.

It localises to the secreted. The protein is Short neurotoxin homolog NTL4 of Bungarus multicinctus (Many-banded krait).